The primary structure comprises 387 residues: Erythronate-4-phosphate dehydrogenase (387 aa).

2 residues coordinate substrate: Ser45 and Thr67. NAD(+) is bound at residue Asp147. Arg208 is a catalytic residue. Residue Asp232 participates in NAD(+) binding. Glu237 is a catalytic residue. His254 acts as the Proton donor in catalysis. Residue Gly257 participates in NAD(+) binding. Position 258 (Tyr258) interacts with substrate.

Belongs to the D-isomer specific 2-hydroxyacid dehydrogenase family. PdxB subfamily. In terms of assembly, homodimer.

Its subcellular location is the cytoplasm. The enzyme catalyses 4-phospho-D-erythronate + NAD(+) = (R)-3-hydroxy-2-oxo-4-phosphooxybutanoate + NADH + H(+). It participates in cofactor biosynthesis; pyridoxine 5'-phosphate biosynthesis; pyridoxine 5'-phosphate from D-erythrose 4-phosphate: step 2/5. Its function is as follows. Catalyzes the oxidation of erythronate-4-phosphate to 3-hydroxy-2-oxo-4-phosphonooxybutanoate. This chain is Erythronate-4-phosphate dehydrogenase, found in Shewanella sediminis (strain HAW-EB3).